The chain runs to 145 residues: 3-dehydroquinate dehydratase (145 aa).

Tyr-23 (proton acceptor) is an active-site residue. Positions 73, 79, and 86 each coordinate substrate. His-99 acts as the Proton donor in catalysis. Residues 100 to 101 (LS) and Arg-110 contribute to the substrate site.

Belongs to the type-II 3-dehydroquinase family. In terms of assembly, homododecamer.

The enzyme catalyses 3-dehydroquinate = 3-dehydroshikimate + H2O. It functions in the pathway metabolic intermediate biosynthesis; chorismate biosynthesis; chorismate from D-erythrose 4-phosphate and phosphoenolpyruvate: step 3/7. In terms of biological role, catalyzes a trans-dehydration via an enolate intermediate. This chain is 3-dehydroquinate dehydratase, found in Desulfitobacterium hafniense (strain Y51).